Consider the following 51-residue polypeptide: Lysis protein for colicin A (51 aa).

An N-terminal signal peptide occupies residues 1 to 18 (MKKIIICVILLAIMLLAA). Cys19 is lipidated: N-palmitoyl cysteine. Cys19 is lipidated: S-diacylglycerol cysteine. Residues 27-51 (TGGGSVSPSSIVTGVSMGSDGVGNP) are disordered.

The protein localises to the cell outer membrane. In terms of biological role, lysis proteins are required for both colicin release and partial cell lysis. The polypeptide is Lysis protein for colicin A (cal) (Citrobacter freundii).